Reading from the N-terminus, the 470-residue chain is mRNA export factor ICP27 homolog (470 aa).

Disordered stretches follow at residues 1–31 (MALS…TGGD) and 73–202 (FSAS…AGDR). Residues 73–85 (FSASPQRAQPSNP) show a composition bias toward polar residues. 2 stretches are compositionally biased toward basic residues: residues 94–107 (HGRR…RRNN) and 178–187 (RVHRNRRRGN). Zn(2+) is bound by residues C359, H437, C441, and C446. Residues 359-446 (CYLSSSGSPT…HKRRCKADTC (88 aa)) form a CHC2-type zinc finger.

It belongs to the HHV-1 ICP27 protein family. In terms of assembly, homodimer. Homodimerization is required for transactivation. Associates in a complex with RNA, and host export factors NXF1/TAP and ALYREF; these interactions allow nuclear export of viral transcripts. Interacts with three host shuttling SR proteins SRSF1, SRSF3 and SRSF7. Interacts with host SRPK1. Interacts with IE62; this interaction enhances IE62 transactivation.

It localises to the host cytoplasm. It is found in the host nucleus. Multifunctional regulator of the expression of viral genes that mediates nuclear export of viral intronless mRNAs. This immediate early (EI) protein promotes the nuclear export of viral intronless mRNAs by interacting with mRNAs and host NXF1/TAP. This is mRNA export factor ICP27 homolog from Equine herpesvirus 1 (strain Kentucky A) (EHV-1).